Consider the following 141-residue polypeptide: Large ribosomal subunit protein uL14 (141 aa).

This sequence belongs to the universal ribosomal protein uL14 family. As to quaternary structure, part of the 50S ribosomal subunit. Forms a cluster with proteins L3 and L24e, part of which may contact the 16S rRNA in 2 intersubunit bridges.

Its function is as follows. Binds to 23S rRNA. Forms part of two intersubunit bridges in the 70S ribosome. This chain is Large ribosomal subunit protein uL14, found in Thermofilum pendens (strain DSM 2475 / Hrk 5).